The following is a 578-amino-acid chain: Asparagine synthetase [glutamine-hydrolyzing] 2 (578 aa).

C2 serves as the catalytic For GATase activity. The 184-residue stretch at 2–185 (CGILAVLGCI…PGHIYSSKQG (184 aa)) folds into the Glutamine amidotransferase type-2 domain. L-glutamine contacts are provided by residues 50-54 (RLAII), 75-77 (NGE), and D98. Residues 210–450 (LRNAFEKAVI…LPKHILYRQK (241 aa)) enclose the Asparagine synthetase domain. ATP-binding positions include L231, I267, and 341-342 (SG).

Expressed in the vascular region adjacent to leaf mesophyll cells in the companion cell-sieve tube element complex.

It carries out the reaction L-aspartate + L-glutamine + ATP + H2O = L-asparagine + L-glutamate + AMP + diphosphate + H(+). Its pathway is amino-acid biosynthesis; L-asparagine biosynthesis. Functionally, essential for nitrogen assimilation, distribution and remobilization within the plant via the phloem. The chain is Asparagine synthetase [glutamine-hydrolyzing] 2 (ASN2) from Arabidopsis thaliana (Mouse-ear cress).